We begin with the raw amino-acid sequence, 243 residues long: Orotidine 5'-phosphate decarboxylase (243 aa).

Residues Asp-19, Lys-41, 69 to 78, Thr-124, Arg-185, Gln-194, Gly-214, and Arg-215 each bind substrate; that span reads DLKFFDIPAT. Lys-71 serves as the catalytic Proton donor.

The protein belongs to the OMP decarboxylase family. Type 1 subfamily. As to quaternary structure, homodimer.

It carries out the reaction orotidine 5'-phosphate + H(+) = UMP + CO2. The protein operates within pyrimidine metabolism; UMP biosynthesis via de novo pathway; UMP from orotate: step 2/2. Its function is as follows. Catalyzes the decarboxylation of orotidine 5'-monophosphate (OMP) to uridine 5'-monophosphate (UMP). The protein is Orotidine 5'-phosphate decarboxylase of Xanthomonas campestris pv. campestris (strain 8004).